A 257-amino-acid polypeptide reads, in one-letter code: UPF0246 protein BF3795 (257 aa).

It belongs to the UPF0246 family.

The protein is UPF0246 protein BF3795 of Bacteroides fragilis (strain ATCC 25285 / DSM 2151 / CCUG 4856 / JCM 11019 / LMG 10263 / NCTC 9343 / Onslow / VPI 2553 / EN-2).